The following is a 198-amino-acid chain: Dephospho-CoA kinase (198 aa).

A DPCK domain is found at 4-198 (RIGLTGGIAS…CGLRADGTTW (195 aa)). Residue 12-17 (ASGKSS) participates in ATP binding.

The protein belongs to the CoaE family.

Its subcellular location is the cytoplasm. The catalysed reaction is 3'-dephospho-CoA + ATP = ADP + CoA + H(+). It functions in the pathway cofactor biosynthesis; coenzyme A biosynthesis; CoA from (R)-pantothenate: step 5/5. Functionally, catalyzes the phosphorylation of the 3'-hydroxyl group of dephosphocoenzyme A to form coenzyme A. The protein is Dephospho-CoA kinase of Parasynechococcus marenigrum (strain WH8102).